A 560-amino-acid chain; its full sequence is Formate--tetrahydrofolate ligase (560 aa).

69 to 76 contributes to the ATP binding site; sequence TPAGEGKS.

This sequence belongs to the formate--tetrahydrofolate ligase family.

The enzyme catalyses (6S)-5,6,7,8-tetrahydrofolate + formate + ATP = (6R)-10-formyltetrahydrofolate + ADP + phosphate. It functions in the pathway one-carbon metabolism; tetrahydrofolate interconversion. In Bacillus pumilus (strain SAFR-032), this protein is Formate--tetrahydrofolate ligase.